The primary structure comprises 77 residues: Small VCP/p97-interacting protein (77 aa).

2 disordered regions span residues 1–20 and 25–77; these read MGLC…DLEE and LAEA…WTVS. Gly-2 carries N-myristoyl glycine lipidation. Residues Cys-4 and Cys-7 are each lipidated (S-palmitoyl cysteine). Residues 21–33 are VCP/p97-interacting motif (VIM); sequence KRAKLAEAAERRQ. Over residues 25 to 37 the composition is skewed to basic and acidic residues; it reads LAEAAERRQKEAA. Phosphoserine is present on Ser-46.

It belongs to the SVIP family. Interacts (via VIM motif) with VCP/p97. Forms a complex with VCP/p97 and DERL1.

Its subcellular location is the membrane. It is found in the smooth endoplasmic reticulum membrane. The protein resides in the golgi apparatus membrane. It localises to the cell membrane. The protein localises to the lysosome membrane. Negative regulator of the ER-associated degradation pathway (ERAD) of misfolded proteins. It competes with AMFR/gp78 for binding VCP/p97, and inhibits AMFR/gp78-VCP/p97 complex formation that is required for degradation of ERAD substrates. Involved in the regulation of adrenal cortisol and dehydroepiandrosterone (DHEA) biosynthesis. The chain is Small VCP/p97-interacting protein (SVIP) from Homo sapiens (Human).